Reading from the N-terminus, the 1997-residue chain is Otoferlin (1997 aa).

One can recognise a C2 1 domain in the interval 1–98 (MALIVHLKTV…VEENRVEVTD (98 aa)). Topologically, residues 1–1963 (MALIVHLKTV…ARYFLWHTYR (1963 aa)) are cytoplasmic. The tract at residues 140 to 167 (QEEKDSQETDGLLPGSRPSTRISGEKSF) is disordered. C2 domains follow at residues 235–356 (KRSK…HKWA) and 399–530 (IEGN…FLPT). The interval 643 to 692 (VDGMSRPLRPRPRKEPGDEEEVDLIQNSSDDEGDEAGDLASVSSTPPMRP) is disordered. A compositionally biased stretch (acidic residues) spans 659–679 (GDEEEVDLIQNSSDDEGDEAG). The stretch at 791–820 (RERLKSCMRELESMGQQAKSLRAQVKRHTV) forms a coiled coil. C2 domains lie at 943 to 1068 (LHSF…PPRF) and 1115 to 1241 (RGPI…PNWN). Ca(2+)-binding residues include Asp975, Asp981, Asp1037, Asp1039, and Asp1045. 3 disordered regions span residues 1253 to 1272 (LRNG…SMEP), 1296 to 1326 (DVAE…ESML), and 1343 to 1402 (LRQH…EKKK). Acidic residues-rich tracts occupy residues 1314-1325 (EEPEEEEPDESM) and 1352-1361 (DLEEKEEMES). The span at 1370-1383 (KSKEKSRAAKEEKK) shows a compositional bias: basic and acidic residues. 2 consecutive C2 domains span residues 1464-1593 (LPED…ATCG) and 1714-1865 (DMPA…KQCT). 8 residues coordinate Ca(2+): Asp1508, Asp1514, Asp1563, Asp1565, Asp1571, Asp1836, Ser1839, and Asp1842. Residues 1964–1984 (WLLLKFLLLFLLLLLFALFLY) traverse the membrane as a helical segment. Over 1985–1997 (SLPGYLAKKILGA) the chain is Extracellular.

It belongs to the ferlin family. Interacts with SNAP25; the interaction is direct. Interacts with STX1; the interaction is direct. Interacts with RAB8B. It depends on Ca(2+) as a cofactor. Isoform 1 is expressed in cochlea and brain. Expressed in the cochlear and vestibular hair cells. Expressed in both inner and outer hair cells (IHCs and OHCs) and cochlear ganglions neurons at postnatal day 2 (P2) and 6 (P6). Expressed only in IHCs at postnatal day 60 (P60) (at protein level). Strongly expressed in brain and inner ear. In the inner ear, it is mainly expressed in the cochlear IHC and vestibular type I sensory hair cells. Weakly expressed in eye, heart, skeletal muscle, liver, kidney, lung and testis.

The protein localises to the cytoplasmic vesicle. The protein resides in the secretory vesicle. It localises to the synaptic vesicle membrane. Its subcellular location is the basolateral cell membrane. It is found in the endoplasmic reticulum membrane. The protein localises to the golgi apparatus membrane. The protein resides in the presynaptic cell membrane. It localises to the cell membrane. Key calcium ion sensor involved in the Ca(2+)-triggered synaptic vesicle-plasma membrane fusion and in the control of neurotransmitter release at these output synapses. Interacts in a calcium-dependent manner to the presynaptic SNARE proteins at ribbon synapses of cochlear inner hair cells (IHCs) to trigger exocytosis of neurotransmitter. Also essential to synaptic exocytosis in immature outer hair cells (OHCs). May also play a role within the recycling of endosomes. This is Otoferlin (Otof) from Mus musculus (Mouse).